The sequence spans 263 residues: Thymidylate synthase (263 aa).

DUMP is bound by residues Arg25 and 123 to 124; that span reads RR. Cys143 serves as the catalytic Nucleophile. DUMP contacts are provided by residues 163-166, Asn174, and 204-206; these read RSGD and HIY. A (6R)-5,10-methylene-5,6,7,8-tetrahydrofolate-binding site is contributed by Asp166. Ser262 contributes to the (6R)-5,10-methylene-5,6,7,8-tetrahydrofolate binding site.

It belongs to the thymidylate synthase family. Bacterial-type ThyA subfamily. In terms of assembly, homodimer.

The protein localises to the cytoplasm. It catalyses the reaction dUMP + (6R)-5,10-methylene-5,6,7,8-tetrahydrofolate = 7,8-dihydrofolate + dTMP. Its pathway is pyrimidine metabolism; dTTP biosynthesis. Catalyzes the reductive methylation of 2'-deoxyuridine-5'-monophosphate (dUMP) to 2'-deoxythymidine-5'-monophosphate (dTMP) while utilizing 5,10-methylenetetrahydrofolate (mTHF) as the methyl donor and reductant in the reaction, yielding dihydrofolate (DHF) as a by-product. This enzymatic reaction provides an intracellular de novo source of dTMP, an essential precursor for DNA biosynthesis. The protein is Thymidylate synthase of Clostridium beijerinckii (strain ATCC 51743 / NCIMB 8052) (Clostridium acetobutylicum).